The chain runs to 77 residues: uncharacterized protein (77 aa).

2 disordered regions span residues 1 to 34 (MSRA…TKMN) and 56 to 77 (LDGD…FSGR). The span at 8–20 (DNDKGWAKKKGAD) shows a compositional bias: basic and acidic residues. Residues 25–34 (PRPHKQTKMN) are compositionally biased toward basic residues. Residues 56 to 70 (LDGDIRRGGNKKSER) are compositionally biased toward basic and acidic residues.

This is an uncharacterized protein from Dictyostelium discoideum (Social amoeba).